A 551-amino-acid chain; its full sequence is Colicin E3 (551 aa).

Disordered stretches follow at residues 1–74 (MSGG…SGGG), 243–269 (TLSP…NTRD), and 293–320 (PDQV…EAAE). Residues 1 to 315 (MSGGDGRGHN…RQQEWDATHP (315 aa)) form a translocation (T) domain region. The span at 20 to 35 (INGGPTGLGVGGGASD) shows a compositional bias: gly residues. The Binds to TolB motif lies at 35-39 (DGSGW). The segment covering 36 to 45 (GSGWSSENNP) has biased composition (low complexity). The span at 46–74 (WGGGSGSGIHWGGGSGHGNGGGNGNSGGG) shows a compositional bias: gly residues. A compositionally biased stretch (basic and acidic residues) spans 296-320 (VKQRQDEENRRQQEWDATHPVEAAE). Residues 316-378 (VEAAERNYER…IAEIKQFNRF (63 aa)) are a coiled coil. The tract at residues 316 to 450 (VEAAERNYER…SAENNLNDEK (135 aa)) is receptor-binding (R) domain. The Hairpin motif lies at 379–385 (AHDPMAG). A coiled-coil region spans residues 386-450 (GHRMWQMAGL…SAENNLNDEK (65 aa)). Positions 406–505 (NKQAAFDAAA…KRWTGDKGRK (100 aa)) are disordered. A compositionally biased stretch (basic and acidic residues) spans 430–472 (ESRKKKEDKKRSAENNLNDEKNKPRKGFKDYGHDYHPAPKTEN). The tract at residues 451–456 (NKPRKG) is linker. The tract at residues 455 to 551 (KGFKDYGHDY…DPKRNIKKYL (97 aa)) is ribosome inactivating activity. The segment at 457–551 (FKDYGHDYHP…DPKRNIKKYL (95 aa)) is cytotoxic RNase (C) domain. His-513 acts as the Proton donor in catalysis. Catalysis depends on Glu-517, which acts as the Proton acceptor. Residues 517-551 (EGYRASDGQHLGSFDPKTGNQLKGPDPKRNIKKYL) are disordered. Positions 530 to 551 (FDPKTGNQLKGPDPKRNIKKYL) are binding of immunity protein. Arg-545 is a catalytic residue.

The protein belongs to the cloacin colicin family. In terms of assembly, native colicin E3 is a 1:1 complex of A chain and protein B (cognate immunity protein, Im3); protein A is 1,000-fold more active in inactivating ribosomes than the native complex. The cytotoxic fragment (residues 456-551, C95) forms a 1:1 complex with Im3. The receptor-binding (R) domain binds obliquely to its receptor BtuB without displacing BtuB's central plug; binding unfolds the R domain. The N-terminal 83 residues (T83) bind OmpF; trimeric complexes with colicin E3, BtuB and OmpF can be cross-linked and immunoprecipitated. Probably inserts into the OmpF pore as an unfolded peptide and spans the OmpF pore. In a complex with T.thermophilus 70S ribosomes, cytotoxic fragment C96 contacts 16S rRNA, 23S rRNA, mRNA, P-site tRNA and ribosomal protein uS12.

Its subcellular location is the secreted. In terms of biological role, colicins are polypeptide toxins produced by and active against E.coli and closely related bacteria. Cleaves 16S rRNA between adenosine-1492 and guanosine-1493 (E.coli 16S rRNA numbering), releasing a 49 nucleotide (nt) 'colicin' fragment. Inactivates 70S ribosomes or 30S subunits by endonucleolytically cleaving 16S RNA at a specific site about 50 nt from its C-terminus. Produces 5'-OH-guanosine and a 2',3'-cyclic phosphate adenosine. Mixing a susceptible (e.g. strain K12 / A19) and colicin E3 producing strain results in total protein translation inhibition within 11 minutes. Its activity is inhibited by cognate immunity protein Im3. Functionally, uses BtuB, the vitamin B transporter, as a receptor on the outer membrane; binds via the receptor (R) domain. Then the translocation domain (T) probably 'fishes' for its outer membrane translocon protein, OmpF. The N-terminal 83 residues (T83) can bind to and occlude OmpF channels. A complex of the cytotoxic C-terminal 96 residues (C96) plus the immunity protein does not occlude OmpF; upon complex separation from the immunity protein C96 becomes disordered and is able to bind OmpF. The N-terminus probably binds TolB and then reinserts into an empty pore of trimeric OmpF; the rest of the protein is pulled through OmpF and crosses the inner membrane, where the cytotoxic fragment is probably released by protease FtsH. This Escherichia coli protein is Colicin E3 (ceaC).